A 190-amino-acid polypeptide reads, in one-letter code: Imidazoleglycerol-phosphate dehydratase (190 aa).

It belongs to the imidazoleglycerol-phosphate dehydratase family.

The protein localises to the cytoplasm. The enzyme catalyses D-erythro-1-(imidazol-4-yl)glycerol 3-phosphate = 3-(imidazol-4-yl)-2-oxopropyl phosphate + H2O. It participates in amino-acid biosynthesis; L-histidine biosynthesis; L-histidine from 5-phospho-alpha-D-ribose 1-diphosphate: step 6/9. The polypeptide is Imidazoleglycerol-phosphate dehydratase (Methanococcus maripaludis (strain DSM 14266 / JCM 13030 / NBRC 101832 / S2 / LL)).